Reading from the N-terminus, the 188-residue chain is Elongation factor P (188 aa).

It belongs to the elongation factor P family.

It localises to the cytoplasm. The protein operates within protein biosynthesis; polypeptide chain elongation. Functionally, involved in peptide bond synthesis. Stimulates efficient translation and peptide-bond synthesis on native or reconstituted 70S ribosomes in vitro. Probably functions indirectly by altering the affinity of the ribosome for aminoacyl-tRNA, thus increasing their reactivity as acceptors for peptidyl transferase. This chain is Elongation factor P, found in Parabacteroides distasonis (strain ATCC 8503 / DSM 20701 / CIP 104284 / JCM 5825 / NCTC 11152).